The chain runs to 95 residues: Scorpine-like peptide Smp76 (95 aa).

An N-terminal signal peptide occupies residues 1–19; that stretch reads MNCKLTALLFLGLIVIASC. The BetaSPN-type CS-alpha/beta domain maps to 55 to 95; the sequence is EFQCVANVDTLGNCKKHCAKTTGEKGYCHGTKCKCGIELSY. Intrachain disulfides connect cysteine 58-cysteine 82, cysteine 68-cysteine 87, and cysteine 72-cysteine 89.

In terms of processing, disulfide bonds are critical for antiviral function, and their disruption inhibit viral activity. As to expression, expressed by the venom gland.

It localises to the secreted. Antibacterial peptide. Dose-dependently inhibits Dengue virus (DENV), Zika virus (ZIKV) and Hepatitis C virus (HCV) infections. Two mechanisms of action have been described by two different groups: one involving activity on extracellular particles, and the other regulating the immune system. On Dengue virus (DENV), Zika virus (ZIKV), suppress the established viral infection, similar to the effect of interferon (IFN)-beta. Mechanistically, upregulates the expression of IFN-beta by activating interferon regulatory transcription factor 3 (IRF3) phosphorylation. On HCV and DENV, acts by inactivating extra-cellular infectious particles without affecting viral replication. Shows very weak inhibition on measles virus. Is neither toxic nor hemolytic in vitro at high concentrations. The chain is Scorpine-like peptide Smp76 from Scorpio palmatus (Israeli golden scorpion).